We begin with the raw amino-acid sequence, 209 residues long: Ribosomal RNA large subunit methyltransferase E (209 aa).

Gly-63, Trp-65, Asp-83, Asp-99, and Asp-124 together coordinate S-adenosyl-L-methionine. Lys-164 serves as the catalytic Proton acceptor.

This sequence belongs to the class I-like SAM-binding methyltransferase superfamily. RNA methyltransferase RlmE family.

The protein resides in the cytoplasm. The enzyme catalyses uridine(2552) in 23S rRNA + S-adenosyl-L-methionine = 2'-O-methyluridine(2552) in 23S rRNA + S-adenosyl-L-homocysteine + H(+). In terms of biological role, specifically methylates the uridine in position 2552 of 23S rRNA at the 2'-O position of the ribose in the fully assembled 50S ribosomal subunit. The protein is Ribosomal RNA large subunit methyltransferase E of Klebsiella pneumoniae (strain 342).